The following is a 338-amino-acid chain: Fructose-1,6-bisphosphatase class 1 (338 aa).

Residues Glu-92, Asp-115, Leu-117, and Asp-118 each coordinate Mg(2+). Substrate-binding positions include 118–121, Asn-211, Tyr-244, 262–264, and Lys-274; these read DGSS and YLY. Position 280 (Glu-280) interacts with Mg(2+).

This sequence belongs to the FBPase class 1 family. In terms of assembly, homotetramer. Requires Mg(2+) as cofactor.

Its subcellular location is the cytoplasm. It carries out the reaction beta-D-fructose 1,6-bisphosphate + H2O = beta-D-fructose 6-phosphate + phosphate. The protein operates within carbohydrate biosynthesis; gluconeogenesis. The protein is Fructose-1,6-bisphosphatase class 1 of Vibrio parahaemolyticus serotype O3:K6 (strain RIMD 2210633).